The following is a 491-amino-acid chain: Mitochondrial distribution and morphology protein 12 (491 aa).

One can recognise an SMP-LTD domain in the interval 1-491 (MSIDLNWEAA…VFPSYWTFLV (491 aa)). Acidic residues predominate over residues 72 to 82 (ESDSSEDEDGE). 3 disordered regions span residues 72–123 (ESDS…NHHD), 201–313 (GWPD…MRER), and 389–434 (GDED…QPRR). 2 stretches are compositionally biased toward basic and acidic residues: residues 83 to 123 (GHDA…NHHD) and 213 to 229 (MTDH…HNKN). A compositionally biased stretch (polar residues) spans 230-249 (ETGSPSRPSTAHTNPTQLSH). Low complexity predominate over residues 252-262 (SAASSSNNTSN). Residues 270 to 279 (DHTSSTTATT) are compositionally biased toward polar residues. The segment covering 400 to 421 (STANTTTAASGSSTDNNNNNNE) has biased composition (low complexity).

It belongs to the MDM12 family. In terms of assembly, component of the ER-mitochondria encounter structure (ERMES) or MDM complex, composed of mmm1, mdm10, mdm12 and mdm34. A mmm1 homodimer associates with one molecule of mdm12 on each side in a pairwise head-to-tail manner, and the SMP-LTD domains of mmm1 and mdm12 generate a continuous hydrophobic tunnel for phospholipid trafficking.

The protein localises to the mitochondrion outer membrane. It is found in the endoplasmic reticulum membrane. Functionally, component of the ERMES/MDM complex, which serves as a molecular tether to connect the endoplasmic reticulum (ER) and mitochondria. Components of this complex are involved in the control of mitochondrial shape and protein biogenesis, and function in nonvesicular lipid trafficking between the ER and mitochondria. Mdm12 is required for the interaction of the ER-resident membrane protein mmm1 and the outer mitochondrial membrane-resident beta-barrel protein mdm10. The mdm12-mmm1 subcomplex functions in the major beta-barrel assembly pathway that is responsible for biogenesis of all mitochondrial outer membrane beta-barrel proteins, and acts in a late step after the SAM complex. The mdm10-mdm12-mmm1 subcomplex further acts in the TOM40-specific pathway after the action of the mdm12-mmm1 complex. Essential for establishing and maintaining the structure of mitochondria and maintenance of mtDNA nucleoids. The protein is Mitochondrial distribution and morphology protein 12 of Talaromyces stipitatus (strain ATCC 10500 / CBS 375.48 / QM 6759 / NRRL 1006) (Penicillium stipitatum).